We begin with the raw amino-acid sequence, 347 residues long: Dihydroorotase (347 aa).

Zn(2+) contacts are provided by histidine 13 and histidine 15. Residues 15–17 (HLR) and asparagine 41 each bind substrate. The Zn(2+) site is built by lysine 99, histidine 136, and histidine 174. Residue lysine 99 is modified to N6-carboxylysine. Position 136 (histidine 136) interacts with substrate. Leucine 219 serves as a coordination point for substrate. A Zn(2+)-binding site is contributed by aspartate 247. Aspartate 247 is a catalytic residue. Residues histidine 251 and alanine 263 each contribute to the substrate site.

It belongs to the metallo-dependent hydrolases superfamily. DHOase family. Class II DHOase subfamily. In terms of assembly, homodimer. It depends on Zn(2+) as a cofactor.

The catalysed reaction is (S)-dihydroorotate + H2O = N-carbamoyl-L-aspartate + H(+). Its pathway is pyrimidine metabolism; UMP biosynthesis via de novo pathway; (S)-dihydroorotate from bicarbonate: step 3/3. Its function is as follows. Catalyzes the reversible cyclization of carbamoyl aspartate to dihydroorotate. The polypeptide is Dihydroorotase (Sinorhizobium medicae (strain WSM419) (Ensifer medicae)).